We begin with the raw amino-acid sequence, 509 residues long: Glycerol kinase (509 aa).

Residue Thr-17 participates in ADP binding. ATP contacts are provided by Thr-17, Thr-18, and Ser-19. Sn-glycerol 3-phosphate is bound at residue Thr-17. Arg-21 provides a ligand contact to ADP. Residues Arg-87, Glu-88, Tyr-139, and Asp-256 each coordinate sn-glycerol 3-phosphate. 5 residues coordinate glycerol: Arg-87, Glu-88, Tyr-139, Asp-256, and Gln-257. Thr-278 and Gly-322 together coordinate ADP. Residues Thr-278, Gly-322, Gln-326, and Ala-423 each coordinate ATP. ADP contacts are provided by Ala-423 and Asn-427.

The protein belongs to the FGGY kinase family.

The catalysed reaction is glycerol + ATP = sn-glycerol 3-phosphate + ADP + H(+). The protein operates within polyol metabolism; glycerol degradation via glycerol kinase pathway; sn-glycerol 3-phosphate from glycerol: step 1/1. Inhibited by fructose 1,6-bisphosphate (FBP). Functionally, key enzyme in the regulation of glycerol uptake and metabolism. Catalyzes the phosphorylation of glycerol to yield sn-glycerol 3-phosphate. This is Glycerol kinase from Corynebacterium glutamicum (strain R).